A 1141-amino-acid chain; its full sequence is Myosin-binding protein C, fast-type (1141 aa).

A disordered region spans residues 1–62 (MPEAKPAAKK…VFLKKPDSVS (62 aa)). A compositionally biased stretch (basic and acidic residues) spans 13–39 (KGKDAPKGAPKEAPPKEAPAEAPKEAP). Ig-like C2-type domains follow at residues 50 to 153 (PTGV…NIDV), 255 to 344 (SAAF…VKEP), 345 to 437 (PVLI…VEEK), 438 to 538 (QLEV…KQEP), and 539 to 638 (PKIH…VVDV). 2 Fibronectin type-III domains span residues 641-737 (PPEA…IAPT) and 739-834 (EPLH…IREI). The Ig-like C2-type 6 domain occupies 838–932 (PKIRLPRHLR…ATIRIRVVEK (95 aa)). Residues 935–1030 (PPINVMVKEV…SKNTARILKT (96 aa)) enclose the Fibronectin type-III 3 domain. One can recognise an Ig-like C2-type 7 domain in the interval 1048–1141 (PKFLTPLIDR…ECKLEVRVPQ (94 aa)).

This sequence belongs to the immunoglobulin superfamily. MyBP family.

Its function is as follows. Thick filament-associated protein located in the crossbridge region of vertebrate striated muscle a bands. In vitro it binds MHC, F-actin and native thin filaments, and modifies the activity of actin-activated myosin ATPase. It may modulate muscle contraction or may play a more structural role. The polypeptide is Myosin-binding protein C, fast-type (MYBPC2) (Homo sapiens (Human)).